The chain runs to 376 residues: tRNA(Met) cytidine acetate ligase (376 aa).

ATP-binding positions include 7 to 20 (IAEY…HYYQ), glycine 102, asparagine 160, and arginine 181.

This sequence belongs to the TmcAL family.

Its subcellular location is the cytoplasm. The enzyme catalyses cytidine(34) in elongator tRNA(Met) + acetate + ATP = N(4)-acetylcytidine(34) in elongator tRNA(Met) + AMP + diphosphate. Functionally, catalyzes the formation of N(4)-acetylcytidine (ac(4)C) at the wobble position of elongator tRNA(Met), using acetate and ATP as substrates. First activates an acetate ion to form acetyladenylate (Ac-AMP) and then transfers the acetyl group to tRNA to form ac(4)C34. The protein is tRNA(Met) cytidine acetate ligase of Exiguobacterium sp. (strain ATCC BAA-1283 / AT1b).